A 365-amino-acid chain; its full sequence is Chorismate synthase (365 aa).

The NADP(+) site is built by arginine 48 and arginine 54. FMN is bound by residues 125 to 127 (RSS), 238 to 239 (NA), alanine 278, 293 to 297 (KPTSS), and arginine 319.

The protein belongs to the chorismate synthase family. As to quaternary structure, homotetramer. The cofactor is FMNH2.

It carries out the reaction 5-O-(1-carboxyvinyl)-3-phosphoshikimate = chorismate + phosphate. It functions in the pathway metabolic intermediate biosynthesis; chorismate biosynthesis; chorismate from D-erythrose 4-phosphate and phosphoenolpyruvate: step 7/7. Functionally, catalyzes the anti-1,4-elimination of the C-3 phosphate and the C-6 proR hydrogen from 5-enolpyruvylshikimate-3-phosphate (EPSP) to yield chorismate, which is the branch point compound that serves as the starting substrate for the three terminal pathways of aromatic amino acid biosynthesis. This reaction introduces a second double bond into the aromatic ring system. The polypeptide is Chorismate synthase (Pseudoalteromonas translucida (strain TAC 125)).